We begin with the raw amino-acid sequence, 346 residues long: Flap endonuclease 1 (346 aa).

The segment at 1–102 is N-domain; it reads MGVTELGKLI…AEIEERRKAK (102 aa). The Mg(2+) site is built by D31, D84, E156, E158, D177, D179, and D239. Residues 120–261 are I-domain; sequence EVAKYAKRAI…RALKLIWEFG (142 aa).

This sequence belongs to the XPG/RAD2 endonuclease family. FEN1 subfamily. As to quaternary structure, interacts with PCNA. PCNA stimulates the nuclease activity without altering cleavage specificity. Mg(2+) serves as cofactor.

Structure-specific nuclease with 5'-flap endonuclease and 5'-3' exonuclease activities involved in DNA replication and repair. During DNA replication, cleaves the 5'-overhanging flap structure that is generated by displacement synthesis when DNA polymerase encounters the 5'-end of a downstream Okazaki fragment. Binds the unpaired 3'-DNA end and kinks the DNA to facilitate 5' cleavage specificity. Cleaves one nucleotide into the double-stranded DNA from the junction in flap DNA, leaving a nick for ligation. Also involved in the base excision repair (BER) pathway. Acts as a genome stabilization factor that prevents flaps from equilibrating into structures that lead to duplications and deletions. Also possesses 5'-3' exonuclease activity on nicked or gapped double-stranded DNA. The protein is Flap endonuclease 1 of Pyrobaculum arsenaticum (strain DSM 13514 / JCM 11321 / PZ6).